The sequence spans 221 residues: NEDD8 ultimate buster 1 (221 aa).

UBA domains follow at residues L1–N19, E30–N76, and S95–N135. Positions G136–L193 are disordered. Residues S146–S168 are compositionally biased toward low complexity. Positions T169–L193 are enriched in acidic residues.

Directly interacts with NEDD8 and PSMD4/S5a, a member of the regulatory subunit of the 26S proteasome. Interacts with AIPL1.

The protein resides in the nucleus. Its function is as follows. Specific down-regulator of the NEDD8 conjugation system. Recruits NEDD8 and its conjugates to the proteasome for degradation. The polypeptide is NEDD8 ultimate buster 1 (NUB1) (Bos taurus (Bovine)).